Consider the following 572-residue polypeptide: MKTSSLLLATTRETPADAVVISHQLMLRAGIIRPLAGGLYNWLPLGVRVLRKVEAIIRDEMNKAQAQELLMPVVQPMELWEESGRAEAYGPELLRFKDRHQREFALGPTHEEIITDLVRKEIRSYKQLPANFYQIQTKFRDEIRPRFGVMRSREFIMKDAYSFHMDKDSLQKTYEDMYDTYNRIFTRLGLDFRPVQADTGSIGGEGSHEFHVLADSGEDDIAFSSDSDYAANIELAEALAPRGERAAATEELTKVETPNKHSIEDVCDFLQLKKKKVAKTLVVKGATEEHPVVALVIRGDHDLNEIKAEKLDLVAEPFEMATDEEIQNAVGCKAGSIGPVNLSIPVIVDRTAAHMADFVCGANEDGFHFTGANWDRDATPTLVADIRNVVKGDPSPCGKGKIEIRRGIEVGHIFQLGNKYSEALNATVLNENSRAQILEMGCYGIGVTRVVAAAIEQNYDDKGIIWPEAIAPFQVCIVPMQMHKSPRVEEAVMTLYNELTAKGIEVLLDDRKERPGVMFNDMELIGIPHRIVIGERGLDKGEIEYKHRRDEKSQDIPEAEFMEFLLGKLSGN.

Belongs to the class-II aminoacyl-tRNA synthetase family. ProS type 1 subfamily. As to quaternary structure, homodimer.

It localises to the cytoplasm. It carries out the reaction tRNA(Pro) + L-proline + ATP = L-prolyl-tRNA(Pro) + AMP + diphosphate. Its function is as follows. Catalyzes the attachment of proline to tRNA(Pro) in a two-step reaction: proline is first activated by ATP to form Pro-AMP and then transferred to the acceptor end of tRNA(Pro). As ProRS can inadvertently accommodate and process non-cognate amino acids such as alanine and cysteine, to avoid such errors it has two additional distinct editing activities against alanine. One activity is designated as 'pretransfer' editing and involves the tRNA(Pro)-independent hydrolysis of activated Ala-AMP. The other activity is designated 'posttransfer' editing and involves deacylation of mischarged Ala-tRNA(Pro). The misacylated Cys-tRNA(Pro) is not edited by ProRS. The polypeptide is Proline--tRNA ligase (Hydrogenovibrio crunogenus (strain DSM 25203 / XCL-2) (Thiomicrospira crunogena)).